The following is an 87-amino-acid chain: U3-theraphotoxin-Hhn1a 5 (87 aa).

The first 24 residues, 1-24 (MVNMKASMFLTFAGLVLLFVVCYA), serve as a signal peptide directing secretion. Residues 25-52 (SESEEKEFPKEMLSSIFAVDNDFKQEER) constitute a propeptide that is removed on maturation. Cystine bridges form between cysteine 54-cysteine 67, cysteine 61-cysteine 72, and cysteine 66-cysteine 79.

It belongs to the neurotoxin 10 (Hwtx-1) family. 51 (Hntx-8) subfamily. Hntx-8 sub-subfamily. Expressed by the venom gland.

Its subcellular location is the secreted. Ion channel inhibitor. In Cyriopagopus hainanus (Chinese bird spider), this protein is U3-theraphotoxin-Hhn1a 5.